The primary structure comprises 367 residues: Cobalt-precorrin-5B C(1)-methyltransferase (367 aa).

It belongs to the CbiD family.

The enzyme catalyses Co-precorrin-5B + S-adenosyl-L-methionine = Co-precorrin-6A + S-adenosyl-L-homocysteine. It functions in the pathway cofactor biosynthesis; adenosylcobalamin biosynthesis; cob(II)yrinate a,c-diamide from sirohydrochlorin (anaerobic route): step 6/10. Its function is as follows. Catalyzes the methylation of C-1 in cobalt-precorrin-5B to form cobalt-precorrin-6A. This Leptospira interrogans serogroup Icterohaemorrhagiae serovar copenhageni (strain Fiocruz L1-130) protein is Cobalt-precorrin-5B C(1)-methyltransferase.